The sequence spans 185 residues: Small ribosomal subunit protein uS4c (185 aa).

One can recognise an S4 RNA-binding domain in the interval 72-134 (MRLDNVIFRL…PTSCNALKGE (63 aa)). The interval 132–154 (KGESPGGGETPDHLTASLSEGSR) is disordered.

It belongs to the universal ribosomal protein uS4 family. In terms of assembly, part of the 30S ribosomal subunit. Contacts protein S5. The interaction surface between S4 and S5 is involved in control of translational fidelity.

The protein resides in the plastid. It localises to the chloroplast. One of the primary rRNA binding proteins, it binds directly to 16S rRNA where it nucleates assembly of the body of the 30S subunit. Its function is as follows. With S5 and S12 plays an important role in translational accuracy. This Woodwardia unigemmata (Chainfern) protein is Small ribosomal subunit protein uS4c (rps4).